The chain runs to 638 residues: Signal recognition particle receptor subunit alpha (638 aa).

3 disordered regions span residues 129 to 205, 218 to 245, and 262 to 315; these read KIRA…VELS, IQKHGRGLEKSSKSTKSDAPKEKGKKAP, and SAPT…ATKG. Composition is skewed to basic and acidic residues over residues 137 to 146 and 153 to 165; these read KKFEDSEKAK and IETRGEKPKEKAK. S177 is modified (phosphoserine). The span at 218–239 shows a compositional bias: basic and acidic residues; the sequence is IQKHGRGLEKSSKSTKSDAPKE. Residue T284 is modified to Phosphothreonine. A phosphoserine mark is found at S296, S297, and S298. Residues 304 to 314 are compositionally biased toward polar residues; the sequence is AQNASKPSATK. Residues 419-636 form an NG domain region; that stretch reads YVVTFCGVNG…NAKAVVAALM (218 aa). Position 425–432 (425–432) interacts with GTP; that stretch reads GVNGVGKS. The residue at position 473 (S473) is a Phosphoserine. 520–524 provides a ligand contact to GTP; that stretch reads DTAGR. T578 bears the Phosphothreonine mark. GTP is bound at residue 588 to 591; that stretch reads TKFD.

The protein belongs to the GTP-binding SRP family. Heterodimer with SRPRB. Interacts with the signal recognition particle (SRP) complex subunit SRP54.

It localises to the endoplasmic reticulum membrane. Functionally, component of the SRP (signal recognition particle) receptor. Ensures, in conjunction with the signal recognition particle, the correct targeting of the nascent secretory proteins to the endoplasmic reticulum membrane system. Forms a guanosine 5'-triphosphate (GTP)-dependent complex with the SRP subunit SRP54. SRP receptor compaction and GTPase rearrangement drive SRP-mediated cotranslational protein translocation into the ER. The chain is Signal recognition particle receptor subunit alpha from Canis lupus familiaris (Dog).